The chain runs to 147 residues: Phospholipase A2 SSD387 (147 aa).

Residues 1 to 19 (MSPKFLLFSIIAVWSCAAA) form the signal peptide. A propeptide spanning residues 20–28 (IEALFIQPR) is cleaved from the precursor. 5 cysteine pairs are disulfide-bonded: C55–C71, C70–C130, C77–C123, C86–C116, and C109–C121. 2 residues coordinate Ca(2+): G56 and G58. The active site involves H74. Position 75 (D75) interacts with Ca(2+). D124 is a catalytic residue.

Ca(2+) is required as a cofactor. Expressed by the venom gland.

It localises to the secreted. The catalysed reaction is a 1,2-diacyl-sn-glycero-3-phosphocholine + H2O = a 1-acyl-sn-glycero-3-phosphocholine + a fatty acid + H(+). Functionally, PLA2 catalyzes the calcium-dependent hydrolysis of the 2-acyl groups in 3-sn-phosphoglycerides. In Scolopendra dehaani (Thai centipede), this protein is Phospholipase A2 SSD387.